The following is a 604-amino-acid chain: Choline transporter-like protein 3 (604 aa).

N-linked (GlcNAc...) asparagine glycosylation is found at Asn-90 and Asn-103. 5 consecutive transmembrane segments (helical) span residues 165-185, 195-215, 237-257, 286-306, and 330-350; these read DTIL…LFTF, IIIS…WWLY, LAFA…IFTL, LWTF…LLSL, and YLWW…LTCQ. 2 N-linked (GlcNAc...) asparagine glycosylation sites follow: Asn-454 and Asn-472. 2 helical membrane passes run 485–505 and 514–534; these read FIIF…GLMA and VWAI…HSFL. Positions 581–592 are enriched in polar residues; it reads NARSQGHKNSLP. The disordered stretch occupies residues 581–604; it reads NARSQGHKNSLPNEEGTELRPIVR.

This sequence belongs to the CTL (choline transporter-like) family. In terms of tissue distribution, expressed in colon, kidney and ileum.

The protein resides in the membrane. The sequence is that of Choline transporter-like protein 3 (Slc44a3) from Rattus norvegicus (Rat).